A 165-amino-acid polypeptide reads, in one-letter code: Nucleotide-binding protein PMT9312_0481 (165 aa).

It belongs to the YajQ family.

Its function is as follows. Nucleotide-binding protein. In Prochlorococcus marinus (strain MIT 9312), this protein is Nucleotide-binding protein PMT9312_0481.